The sequence spans 163 residues: Ribosome maturation factor RimM (163 aa).

One can recognise a PRC barrel domain in the interval 90–155 (VGEYYCKDLV…ADIDLNKKRL (66 aa)).

This sequence belongs to the RimM family. In terms of assembly, binds ribosomal protein uS19.

It localises to the cytoplasm. Functionally, an accessory protein needed during the final step in the assembly of 30S ribosomal subunit, possibly for assembly of the head region. Essential for efficient processing of 16S rRNA. May be needed both before and after RbfA during the maturation of 16S rRNA. It has affinity for free ribosomal 30S subunits but not for 70S ribosomes. The protein is Ribosome maturation factor RimM of Neorickettsia sennetsu (strain ATCC VR-367 / Miyayama) (Ehrlichia sennetsu).